Here is a 541-residue protein sequence, read N- to C-terminus: Pseudokinase FAM20A (541 aa).

Residues 1–33 (MPGLRRDRLLALLLLGALFSADLYFHLWPQVQR) form the signal peptide. N-linked (GlcNAc...) asparagine glycosylation is found at Asn70, Asn145, and Asn287. Intrachain disulfides connect Cys314/Cys330, Cys319/Cys323, Cys378/Cys452, and Cys453/Cys512. Residue Asn388 is glycosylated (N-linked (GlcNAc...) asparagine). Asn538 carries an N-linked (GlcNAc...) asparagine glycan.

Belongs to the FAM20 family. In terms of assembly, interacts with FAM20C; probably forming a heterotetramer of 2 subunits of FAM20A and 2 subunits of FAM20C. In terms of processing, N-glycosylated. In the mammary gland, expressed at higher levels in lactating mice than in virgin mice. Observed throughout the tissues of the mandibular incisor, including the secretory and maturation stage ameloblasts, the suprabasal layers of the gingival epithelium and the odontoblasts. Weak expression in the enamel matrix.

The protein localises to the secreted. The protein resides in the golgi apparatus. It localises to the endoplasmic reticulum. Functionally, pseudokinase that acts as an allosteric activator of the Golgi serine/threonine protein kinase FAM20C and is involved in biomineralization of teeth. Forms a complex with FAM20C and increases the ability of FAM20C to phosphorylate the proteins that form the 'matrix' that guides the deposition of the enamel minerals. The polypeptide is Pseudokinase FAM20A (Mus musculus (Mouse)).